The following is a 72-amino-acid chain: Translation initiation factor IF-1 (72 aa).

An S1-like domain is found at 1–72; sequence MAKEDNFELE…SKGRITYRAR (72 aa).

Belongs to the IF-1 family. As to quaternary structure, component of the 30S ribosomal translation pre-initiation complex which assembles on the 30S ribosome in the order IF-2 and IF-3, IF-1 and N-formylmethionyl-tRNA(fMet); mRNA recruitment can occur at any time during PIC assembly.

It localises to the cytoplasm. Functionally, one of the essential components for the initiation of protein synthesis. Stabilizes the binding of IF-2 and IF-3 on the 30S subunit to which N-formylmethionyl-tRNA(fMet) subsequently binds. Helps modulate mRNA selection, yielding the 30S pre-initiation complex (PIC). Upon addition of the 50S ribosomal subunit IF-1, IF-2 and IF-3 are released leaving the mature 70S translation initiation complex. The chain is Translation initiation factor IF-1 from Saccharophagus degradans (strain 2-40 / ATCC 43961 / DSM 17024).